Reading from the N-terminus, the 548-residue chain is Chaperonin GroEL 1 (548 aa).

Residues 30-33 (TLGP), Lys51, 87-91 (DGTTT), Gly415, 479-481 (NAA), and Asp495 contribute to the ATP site.

Belongs to the chaperonin (HSP60) family. As to quaternary structure, forms a cylinder of 14 subunits composed of two heptameric rings stacked back-to-back. Interacts with the co-chaperonin GroES.

It is found in the cytoplasm. It catalyses the reaction ATP + H2O + a folded polypeptide = ADP + phosphate + an unfolded polypeptide.. Functionally, together with its co-chaperonin GroES, plays an essential role in assisting protein folding. The GroEL-GroES system forms a nano-cage that allows encapsulation of the non-native substrate proteins and provides a physical environment optimized to promote and accelerate protein folding. This Escherichia coli O1:K1 / APEC protein is Chaperonin GroEL 1.